The primary structure comprises 102 residues: Death-associated protein 1 (102 aa).

Residues 1–102 (MSSPPEGKLE…RTQHIQQPRK (102 aa)) are disordered. At serine 2 the chain carries N-acetylserine. Phosphoserine; by MTOR is present on serine 3. An N6-acetyllysine modification is found at lysine 29. Residues 32-43 (HTGDTKEEKDKD) show a composition bias toward basic and acidic residues. Residue serine 49 is modified to Phosphoserine. Serine 51 carries the phosphoserine; by MTOR modification. Serine 91 carries the post-translational modification Phosphoserine. A compositionally biased stretch (polar residues) spans 92 to 102 (PRTQHIQQPRK).

It belongs to the DAP-DAPL1 family. Associates with ribosomes; inhibiting translation. Interacts with eiF5a (EIF5A and EIF5A2); inhibiting translation. In terms of processing, phosphorylated. Phosphorylation by MTOR inhibits the suppressive activity of DAP toward autophagy.

Functionally, ribosome-binding protein involved in ribosome hibernation, a process during which ribosomes are stabilized in an inactive state and preserved from proteasomal degradation. Acts via its association with eiF5a (EIF5A and EIF5A2) at the polypeptide exit tunnel of the ribosome, preventing mRNA translation. Involved in ribosome hibernation in the mature oocyte by preventing mRNA translation, leading to ribosome inactivation. Ribosomes, which are produced in large quantities during oogenesis, are stored and translationally repressed in the oocyte and early embryo. Also acts as a negative regulator of autophagy. Involved in mediating interferon-gamma-induced cell death. In Homo sapiens (Human), this protein is Death-associated protein 1.